A 339-amino-acid polypeptide reads, in one-letter code: Foldase protein PrsA (339 aa).

An N-terminal signal peptide occupies residues 1–26 (MKHLKNNTKKFTALLFALLFSMSIAG). C27 is lipidated: N-palmitoyl cysteine. Residue C27 is the site of S-diacylglycerol cysteine attachment. The PpiC domain maps to 197–287 (KPTFHAQHVL…FGYHVIKLID (91 aa)).

The protein belongs to the PrsA family.

The protein resides in the cell membrane. The enzyme catalyses [protein]-peptidylproline (omega=180) = [protein]-peptidylproline (omega=0). Its function is as follows. Plays a major role in protein secretion by helping the post-translocational extracellular folding of several secreted proteins. This chain is Foldase protein PrsA, found in Clostridium tetani (strain Massachusetts / E88).